We begin with the raw amino-acid sequence, 154 residues long: Heat shock protein beta-3 (154 aa).

Residues 48-71 form a disordered region; it reads ARGAGTPQALAEDSASTEKPPGEG. Residues 57–154 form the sHSP domain; it reads LAEDSASTEK…VEVKDSLGTK (98 aa).

It belongs to the small heat shock protein (HSP20) family.

It is found in the cytoplasm. Its subcellular location is the nucleus. In terms of biological role, inhibitor of actin polymerization. The chain is Heat shock protein beta-3 (Hspb3) from Mus musculus (Mouse).